A 173-amino-acid polypeptide reads, in one-letter code: RNA polymerase sigma factor TcsR (173 aa).

The sigma-70 factor domain-4 stretch occupies residues 122 to 169 (IKDLTQNEKNILRKIYLHGLRESEISRELNISRQAVNKTHLRALEKLK). Residues 143–162 (ESEISRELNISRQAVNKTHL) constitute a DNA-binding region (H-T-H motif).

Belongs to the sigma-70 factor family.

Functionally, sigma factors are initiation factors that promote the attachment of RNA polymerase to specific initiation sites and are then released. Transcriptional regulator specifically required to activate expression of the toxin gene locus, composed of tcsL and tcdE/utxA. The polypeptide is RNA polymerase sigma factor TcsR (Paraclostridium sordellii (Clostridium sordellii)).